The following is a 183-amino-acid chain: Ribosome rescue factor SmrB (183 aa).

The 76-residue stretch at 98-173 folds into the Smr domain; the sequence is LDLHGLTQLQ…GDAALLVLIE (76 aa).

It belongs to the SmrB family. As to quaternary structure, associates with collided ribosomes, but not with correctly translating polysomes.

Its function is as follows. Acts as a ribosome collision sensor. Detects stalled/collided disomes (pairs of ribosomes where the leading ribosome is stalled and a second ribosome has collided with it) and endonucleolytically cleaves mRNA at the 5' boundary of the stalled ribosome. Stalled/collided disomes form a new interface (primarily via the 30S subunits) that binds SmrB. Cleaved mRNA becomes available for tmRNA ligation, leading to ribosomal subunit dissociation and rescue of stalled ribosomes. This is Ribosome rescue factor SmrB from Escherichia coli (strain 55989 / EAEC).